The primary structure comprises 84 residues: Small ribosomal subunit protein uS17 (84 aa).

This sequence belongs to the universal ribosomal protein uS17 family. As to quaternary structure, part of the 30S ribosomal subunit.

One of the primary rRNA binding proteins, it binds specifically to the 5'-end of 16S ribosomal RNA. The chain is Small ribosomal subunit protein uS17 from Nitrosomonas europaea (strain ATCC 19718 / CIP 103999 / KCTC 2705 / NBRC 14298).